The following is a 500-amino-acid chain: Probable serine carboxypeptidase CPVL (500 aa).

Positions 1–23 (MKVSLSFLLTILIVIITIKVNLS) are cleaved as a signal peptide. Asn110 and Asn161 each carry an N-linked (GlcNAc...) asparagine glycan. Ser233 is a catalytic residue. Asn333 and Asn360 each carry an N-linked (GlcNAc...) asparagine glycan. Catalysis depends on residues Asp414 and His474.

Belongs to the peptidase S10 family.

It is found in the secreted. In terms of biological role, may be involved in the digestion of phagocytosed particles in the lysosome, participation in an inflammatory protease cascade, and trimming of peptides for antigen presentation. In Dictyostelium discoideum (Social amoeba), this protein is Probable serine carboxypeptidase CPVL (cpvl).